We begin with the raw amino-acid sequence, 309 residues long: MRHFISVNQLEADEMYQIIRKANELRDRPNQLNRQLFAGNLFFEPSTRTKMSFSVAERKLGVEILDFHTEASSLAKGESLYDTAKTFEAIGANFLVIRHPSDQWISELEQGGKLNIPVINAGSGKEEHPTQCLLDLLTMYQEFGSIKGLKVVIAGDIKHSRVAKSNAMALTKLGAKVIFSAAPGFEDHTLDYPYLTMDEAIEEADVLMLLRIQHERHLHKAETSDYLSLYGLTKERYKKLQDHAILMHPAPINRGVEIDTNLVESEKSRIFKQMSNGVYVRMAIIMHVLSEWGIIHENNLIKRKSLTAI.

Carbamoyl phosphate contacts are provided by R48 and T49. Position 76 (K76) interacts with L-aspartate. The carbamoyl phosphate site is built by R98, H128, and Q131. 2 residues coordinate L-aspartate: R161 and R211. Positions 250 and 251 each coordinate carbamoyl phosphate.

This sequence belongs to the aspartate/ornithine carbamoyltransferase superfamily. ATCase family. Heterododecamer (2C3:3R2) of six catalytic PyrB chains organized as two trimers (C3), and six regulatory PyrI chains organized as three dimers (R2).

The enzyme catalyses carbamoyl phosphate + L-aspartate = N-carbamoyl-L-aspartate + phosphate + H(+). The protein operates within pyrimidine metabolism; UMP biosynthesis via de novo pathway; (S)-dihydroorotate from bicarbonate: step 2/3. In terms of biological role, catalyzes the condensation of carbamoyl phosphate and aspartate to form carbamoyl aspartate and inorganic phosphate, the committed step in the de novo pyrimidine nucleotide biosynthesis pathway. In Oceanobacillus iheyensis (strain DSM 14371 / CIP 107618 / JCM 11309 / KCTC 3954 / HTE831), this protein is Aspartate carbamoyltransferase catalytic subunit.